The following is a 685-amino-acid chain: uncharacterized protein (685 aa).

Disordered regions lie at residues 502–538 (NLNQ…SLNK) and 635–685 (RSKR…IHNA). Positions 518 to 538 (SSENMTKFPSSRGKSTVSLNK) are enriched in polar residues. Residues 675–685 (KLKKSLIIHNA) show a composition bias toward basic residues.

This is an uncharacterized protein from Homo sapiens (Human).